Consider the following 696-residue polypeptide: Probable transporter efuK (696 aa).

Positions 603-642 are disordered; the sequence is SLNGGKMQGASDAKSKVEQGQRAMRKQDEQNGSKWEPVFF. Residues 615-633 are compositionally biased toward basic and acidic residues; that stretch reads AKSKVEQGQRAMRKQDEQN.

Belongs to the OSBP family.

Its function is as follows. Probable transporter; part of the gene cluster that mediates the biosynthesis of enfumafungin, a glycosylated fernene-type triterpenoid with potent antifungal activity, mediated by its interaction with beta-1,3-glucan synthase and the fungal cell wall. Might be involved in transport of enfumafungin to and across organelle membranes. The polypeptide is Probable transporter efuK (Hormonema carpetanum).